Consider the following 190-residue polypeptide: Large ribosomal subunit protein bL9 (190 aa).

It belongs to the bacterial ribosomal protein bL9 family.

In terms of biological role, binds to the 23S rRNA. In Methylorubrum populi (strain ATCC BAA-705 / NCIMB 13946 / BJ001) (Methylobacterium populi), this protein is Large ribosomal subunit protein bL9.